Consider the following 425-residue polypeptide: Serine--tRNA ligase (425 aa).

Residue 231-233 coordinates L-serine; the sequence is TAE. 262–264 contributes to the ATP binding site; it reads RRE. L-serine is bound at residue E285. 349 to 352 lines the ATP pocket; it reads EISS. Position 385 (S385) interacts with L-serine.

The protein belongs to the class-II aminoacyl-tRNA synthetase family. Type-1 seryl-tRNA synthetase subfamily. Homodimer. The tRNA molecule binds across the dimer.

Its subcellular location is the cytoplasm. The catalysed reaction is tRNA(Ser) + L-serine + ATP = L-seryl-tRNA(Ser) + AMP + diphosphate + H(+). It carries out the reaction tRNA(Sec) + L-serine + ATP = L-seryl-tRNA(Sec) + AMP + diphosphate + H(+). It functions in the pathway aminoacyl-tRNA biosynthesis; selenocysteinyl-tRNA(Sec) biosynthesis; L-seryl-tRNA(Sec) from L-serine and tRNA(Sec): step 1/1. Functionally, catalyzes the attachment of serine to tRNA(Ser). Is also able to aminoacylate tRNA(Sec) with serine, to form the misacylated tRNA L-seryl-tRNA(Sec), which will be further converted into selenocysteinyl-tRNA(Sec). In Aquifex aeolicus (strain VF5), this protein is Serine--tRNA ligase.